We begin with the raw amino-acid sequence, 837 residues long: MWGRLWPLLFSFLTVTAVPGPSLRRPSRELDATPRLTISYEELSQIRHFKGQTQNYSTLLLEEASERLLVGARGALFSLSARDIRDRTHKEIHWEASPEMQSKCHQKGKNNQTECFNHVRFLQRLNATHFYACGTHAFQPLCAAIDAETFILPTSFEEGKEKCPYDPARGFTGLIIDGGLYTATRYEFRSIPDIRRSRHPHSLRTEEAPMHWLNDAEFVFSVLVRESKTSAVGDDDKIYFFFMEREEGSSSFTQSRSSHRVARVARVCKGDLGGKKILQKKWTSFLKARLICHIPQYETLRGVCSLNADTSSHTHFYAVFTLTTQWKTLEASAICRYDLAEIQAVFTGPFMEYQDGARRWGRYEGGVPEPRPGSCITDSLRSRGYNSSQDLPSLVLDFVKLHPLMARPVVPTRGRPLLLKRNVRYTHLTGTHVSTPAGPTYDLLFLGTADGWIHKAVVLGSGMHIIEEIQVFREPQSVDNLVISPMQHSLYVGAASGVLQFPLSSCSRYQSCYDCILARDPYCGWDSSIHACMVATTVANRTELIQDIERGNRGCEGSRDAGPPPPLKTRSVLRGDDVLLPCDQPSNLARALWLLNGSKSLSDGQDGYRVGVDGLLVTDTQLEHSGNYGCYAEENGLRMLLASYSLTVRPATPAPAPQAPATPGAQLAHDMRMFYVVAIAILGGLCLILASSLLYVACLKGGRRGRRRKYSLGRAGRAGGSAVQLQTVSGQCPGEEDEGDDGEGTGGLESGCLQIIPGEGAPAPPPPPPPPPPAELTNGLVALPSRLRRMNGNSYVLLRQSNNGVPAGPCSFAEELSRILEKRKHTQLVEQLDESSV.

The N-terminal stretch at 1–17 (MWGRLWPLLFSFLTVTA) is a signal peptide. Residues 18–673 (VPGPSLRRPS…GAQLAHDMRM (656 aa)) lie on the Extracellular side of the membrane. The Sema domain occupies 35-503 (RLTISYEELS…AASGVLQFPL (469 aa)). 3 N-linked (GlcNAc...) asparagine glycosylation sites follow: asparagine 55, asparagine 111, and asparagine 126. Cysteine 104 and cysteine 115 are disulfide-bonded. 3 disulfides stabilise this stretch: cysteine 133-cysteine 142, cysteine 268-cysteine 375, and cysteine 292-cysteine 335. A glycan (N-linked (GlcNAc...) asparagine) is linked at asparagine 386. One can recognise a PSI domain in the interval 505–556 (SCSRYQSCYDCILARDPYCGWDSSIHACMVATTVANRTELIQDIERGNRGCE). 2 cysteine pairs are disulfide-bonded: cysteine 506–cysteine 523 and cysteine 515–cysteine 532. N-linked (GlcNAc...) asparagine glycosylation is found at asparagine 540 and asparagine 596. The region spanning 565 to 647 (PPLKTRSVLR…RMLLASYSLT (83 aa)) is the Ig-like C2-type domain. Cysteines 582 and 630 form a disulfide. Residues 674-694 (FYVVAIAILGGLCLILASSLL) traverse the membrane as a helical segment. At 695–837 (YVACLKGGRR…LVEQLDESSV (143 aa)) the chain is on the cytoplasmic side. The segment at 721–776 (SAVQLQTVSGQCPGEEDEGDDGEGTGGLESGCLQIIPGEGAPAPPPPPPPPPPAEL) is disordered. Residues 734-743 (GEEDEGDDGE) are compositionally biased toward acidic residues. Residues 762 to 774 (PAPPPPPPPPPPA) show a composition bias toward pro residues. A phosphoserine mark is found at serine 794 and serine 836.

The protein belongs to the semaphorin family. As to quaternary structure, interacts with PLXNB2. In terms of tissue distribution, brain, spinal cord, and several sensory organs as well as specific populations of projection neurons.

The protein resides in the cell membrane. Its function is as follows. Cell surface receptor for PLXNB2. May play a role in axon guidance. The protein is Semaphorin-4G (Sema4g) of Mus musculus (Mouse).